Consider the following 227-residue polypeptide: Enolase-phosphatase E1 (227 aa).

Mg(2+)-binding residues include aspartate 11 and glutamate 13. Residues 118–119 (SS) and lysine 161 contribute to the substrate site. Aspartate 186 is a binding site for Mg(2+).

Belongs to the HAD-like hydrolase superfamily. MasA/MtnC family. In terms of assembly, monomer. It depends on Mg(2+) as a cofactor.

Its subcellular location is the cytoplasm. The protein resides in the nucleus. The catalysed reaction is 5-methylsulfanyl-2,3-dioxopentyl phosphate + H2O = 1,2-dihydroxy-5-(methylsulfanyl)pent-1-en-3-one + phosphate. It functions in the pathway amino-acid biosynthesis; L-methionine biosynthesis via salvage pathway; L-methionine from S-methyl-5-thio-alpha-D-ribose 1-phosphate: step 3/6. It participates in amino-acid biosynthesis; L-methionine biosynthesis via salvage pathway; L-methionine from S-methyl-5-thio-alpha-D-ribose 1-phosphate: step 4/6. Its function is as follows. Bifunctional enzyme that catalyzes the enolization of 2,3-diketo-5-methylthiopentyl-1-phosphate (DK-MTP-1-P) into the intermediate 2-hydroxy-3-keto-5-methylthiopentenyl-1-phosphate (HK-MTPenyl-1-P), which is then dephosphorylated to form the acireductone 1,2-dihydroxy-3-keto-5-methylthiopentene (DHK-MTPene). The sequence is that of Enolase-phosphatase E1 from Saccharomyces cerevisiae (strain JAY291) (Baker's yeast).